A 323-amino-acid polypeptide reads, in one-letter code: MTALNHWQPSADIKNHLKRAKIIAKIRQFFTERGLLEVETPVLSEFGVTDLHLSTFSTEFLAPFGEQSKTLWLSTSPEYHMKRLLAAGSGPIFQISKVFRNEEAGNRHNPEFTMLEWYRPHFHMHRLINEVDDLLQQILDCPPAESLSYQFVFQEYVGLDPLSAERSELIEAARKHNFMAEDNEDRDTLLQFLFSEVVEPQIGKERPIAVYHFPSTQAALAQVSPEDQRVAERFEFYYKGLELANGFHELADAQEQRHRFELDNQQRQKCELPTREIDERFLAALEAGMPDASGVALGIDRLMMIALDCEKINDVISFAVDNA.

76–78 (SPE) provides a ligand contact to substrate. Residues 100-102 (RNE) and asparagine 109 each bind ATP. Substrate is bound at residue tyrosine 118. Residue 242-243 (EL) coordinates ATP. Glutamate 249 contacts substrate. Glycine 298 lines the ATP pocket.

The protein belongs to the class-II aminoacyl-tRNA synthetase family. EpmA subfamily. As to quaternary structure, homodimer.

It catalyses the reaction D-beta-lysine + L-lysyl-[protein] + ATP = N(6)-((3R)-3,6-diaminohexanoyl)-L-lysyl-[protein] + AMP + diphosphate + H(+). Functionally, with EpmB is involved in the beta-lysylation step of the post-translational modification of translation elongation factor P (EF-P). Catalyzes the ATP-dependent activation of (R)-beta-lysine produced by EpmB, forming a lysyl-adenylate, from which the beta-lysyl moiety is then transferred to the epsilon-amino group of a conserved specific lysine residue in EF-P. In Haemophilus influenzae (strain ATCC 51907 / DSM 11121 / KW20 / Rd), this protein is Elongation factor P--(R)-beta-lysine ligase.